The sequence spans 333 residues: Cinnamoyl-CoA reductase 1 (333 aa).

NADP(+) is bound by residues 13 to 19 (GAGGFIA), arginine 38, lysine 44, 64 to 65 (DL), 84 to 86 (TAS), tyrosine 157, lysine 161, 184 to 187 (PVLV), and serine 199. The cysteines at positions 150 and 158 are disulfide-linked. The active-site Proton donor is the lysine 161.

Belongs to the NAD(P)-dependent epimerase/dehydratase family. Dihydroflavonol-4-reductase subfamily. In terms of processing, the formation of a reversible disulfide bond reduces activity by perturbing the positioning of nearby catalytic residues. Expressed in flowers, leaves and stems.

The protein localises to the cytoplasm. The catalysed reaction is (E)-coniferaldehyde + NADP(+) + CoA = (E)-feruloyl-CoA + NADPH + H(+). It catalyses the reaction (E)-4-coumaraldehyde + NADP(+) + CoA = (E)-4-coumaroyl-CoA + NADPH + H(+). The enzyme catalyses (E)-sinapaldehyde + NADP(+) + CoA = (E)-sinapoyl-CoA + NADPH + H(+). It carries out the reaction (E)-cinnamaldehyde + NADP(+) + CoA = (E)-cinnamoyl-CoA + NADPH + H(+). The protein operates within aromatic compound metabolism; phenylpropanoid biosynthesis. With respect to regulation, inhibited by sodium iodide-mediated oxidation. In terms of biological role, involved in the latter stages of lignin biosynthesis. Catalyzes one of the last steps of monolignol biosynthesis, the conversion of cinnamoyl-CoAs into their corresponding cinnamaldehydes. Mediates the conversion of feruloyl CoA to coniferylaldehyde. Also active toward p-coumaroyl-CoA and sinapoyl-CoA. Involved in the production of floral volatile phenylpropanoids in flowers of fragrant cultivars (e.g. cv. Mitchell and cv. V26) from cinnamic acid, a common precursor with the anthocyanin biosynthesis pathway involved in flower pigmentation. The chain is Cinnamoyl-CoA reductase 1 from Petunia hybrida (Petunia).